Consider the following 114-residue polypeptide: Monothiol glutaredoxin-S8 (114 aa).

In terms of domain architecture, Glutaredoxin spans 1-113; it reads MDRVTRLASQ…PLLRDAGALW (113 aa). [2Fe-2S] cluster is bound at residue cysteine 21.

It belongs to the glutaredoxin family. CC-type subfamily.

It is found in the cytoplasm. May only reduce GSH-thiol disulfides, but not protein disulfides. The polypeptide is Monothiol glutaredoxin-S8 (GRXS8) (Oryza sativa subsp. japonica (Rice)).